The sequence spans 179 residues: Signal peptidase complex catalytic subunit SEC11A (179 aa).

The Cytoplasmic portion of the chain corresponds to 1 to 16; the sequence is MLSLDFLDDVRRMNKR. The chain crosses the membrane as a helical; Signal-anchor for type II membrane protein span at residues 17 to 36; that stretch reads QLYYQVLNFGMIVSSALMIW. The Lumenal portion of the chain corresponds to 37 to 179; the sequence is KGLMLITGSE…LGLFVLVHRE (143 aa). Active-site charge relay system residues include serine 56, histidine 96, and aspartate 122. The interval 165–176 is C-terminal short (CTS) helix; it reads AVLFLLGLFVLV.

The protein belongs to the peptidase S26B family. In terms of assembly, component of the signal peptidase complex paralog A (SPC-A) composed of a catalytic subunit SEC11A and three accessory subunits SPCS1, SPCS2 and SPCS3. Within the complex, interacts with SPCS2 and SPCS3. The complex induces a local thinning of the ER membrane which is used to measure the length of the signal peptide (SP) h-region of protein substrates. This ensures the selectivity of the complex towards h-regions shorter than 18-20 amino acids.

Its subcellular location is the endoplasmic reticulum membrane. It carries out the reaction Cleavage of hydrophobic, N-terminal signal or leader sequences from secreted and periplasmic proteins.. Functionally, catalytic component of the signal peptidase complex (SPC) which catalyzes the cleavage of N-terminal signal sequences from nascent proteins as they are translocated into the lumen of the endoplasmic reticulum. Specifically cleaves N-terminal signal peptides that contain a hydrophobic alpha-helix (h-region) shorter than 18-20 amino acids. The chain is Signal peptidase complex catalytic subunit SEC11A (Sec11a) from Rattus norvegicus (Rat).